A 159-amino-acid polypeptide reads, in one-letter code: Transcription elongation factor GreA (159 aa).

The protein belongs to the GreA/GreB family.

Necessary for efficient RNA polymerase transcription elongation past template-encoded arresting sites. The arresting sites in DNA have the property of trapping a certain fraction of elongating RNA polymerases that pass through, resulting in locked ternary complexes. Cleavage of the nascent transcript by cleavage factors such as GreA or GreB allows the resumption of elongation from the new 3'terminus. GreA releases sequences of 2 to 3 nucleotides. The protein is Transcription elongation factor GreA of Mycoplasmoides gallisepticum (strain R(low / passage 15 / clone 2)) (Mycoplasma gallisepticum).